Reading from the N-terminus, the 175-residue chain is NADH-ubiquinone oxidoreductase chain 6 (175 aa).

A run of 6 helical transmembrane segments spans residues 1–21 (MMYI…GFSS), 25–45 (PVYG…IIMG), 51–71 (LGLV…GYTI), 87–107 (VVLG…MWLF), 112–132 (ELVG…EGGF), and 148–168 (YGFW…FIAI).

This sequence belongs to the complex I subunit 6 family. Core subunit of respiratory chain NADH dehydrogenase (Complex I) which is composed of 45 different subunits.

Its subcellular location is the mitochondrion inner membrane. The catalysed reaction is a ubiquinone + NADH + 5 H(+)(in) = a ubiquinol + NAD(+) + 4 H(+)(out). Its function is as follows. Core subunit of the mitochondrial membrane respiratory chain NADH dehydrogenase (Complex I) which catalyzes electron transfer from NADH through the respiratory chain, using ubiquinone as an electron acceptor. Essential for the catalytic activity and assembly of complex I. In Loxodonta africana (African elephant), this protein is NADH-ubiquinone oxidoreductase chain 6 (MT-ND6).